We begin with the raw amino-acid sequence, 866 residues long: Scm-like with four MBT domains protein 1 (866 aa).

MBT repeat units follow at residues Leu-20 to Pro-120, Ser-128 to Pro-232, Ala-242 to Pro-348, and Phe-356 to Pro-453. Residues Val-34–Val-42 form an antigenic epitope region. Residues Lys-641 to Lys-777 form a disordered region. Basic residues predominate over residues Lys-663–Ser-682. The span at Ser-683–Pro-694 shows a compositional bias: polar residues. Acidic residues-rich tracts occupy residues Gly-699–Leu-713 and Gln-721–Glu-730. Positions Cys-737–Ser-749 are enriched in low complexity. 2 positions are modified to phosphoserine: Ser-767 and Ser-775. An SAM domain is found at Trp-796–Phe-864.

As to quaternary structure, interacts with MYOD1. Component of the SLC (SFMBT1-LSD1-CoREST) corepressor complex, which also contains KDM1A/LSD1 and RCOR1/CoREST. Interacts with KDM1A/LSD1 and RCOR1/CoREST. Interacts with L3MBTL3. Expressed in all cell lines and normal tissues tested, including the thymus.

Its subcellular location is the nucleus. Its function is as follows. Histone-binding protein, which is part of various corepressor complexes. Mediates the recruitment of corepressor complexes to target genes, followed by chromatin compaction and repression of transcription. Plays a role during myogenesis: required for the maintenance of undifferentiated states of myogenic progenitor cells via interaction with MYOD1. Interaction with MYOD1 leads to the recruitment of associated corepressors and silencing of MYOD1 target genes. Part of the SLC complex in germ cells, where it may play a role during spermatogenesis. The chain is Scm-like with four MBT domains protein 1 (SFMBT1) from Homo sapiens (Human).